The chain runs to 431 residues: E3 ubiquitin-protein ligase marc-3 (431 aa).

An RING-CH-type zinc finger spans residues 5–74; sequence NASLGPAVCR…EICKFAFKIK (70 aa). Zn(2+) is bound by residues cysteine 13, cysteine 16, cysteine 38, cysteine 40, histidine 48, cysteine 51, cysteine 64, and cysteine 67. The next 2 membrane-spanning stretches (helical) occupy residues 98-118 and 157-177; these read PFID…GVFM and LFLF…VSAL. Disordered stretches follow at residues 267–289 and 327–349; these read TSPD…FGRR and SRAT…RDMR. The segment covering 273 to 282 has biased composition (basic and acidic residues); that stretch reads NTHHHDESRN.

It is found in the cell membrane. The protein resides in the endosome membrane. It catalyses the reaction S-ubiquitinyl-[E2 ubiquitin-conjugating enzyme]-L-cysteine + [acceptor protein]-L-lysine = [E2 ubiquitin-conjugating enzyme]-L-cysteine + N(6)-ubiquitinyl-[acceptor protein]-L-lysine.. The protein operates within protein modification; protein ubiquitination. Its function is as follows. E3 ubiquitin-protein ligase which positively regulates the fast polyspermy block during fertilization, preventing entry of more than one sperm into the oocyte. After fertilization, required in the zygote for the selective degradation of a subset of maternal membrane proteins including cav-1, chs-1 and rme-2, probably by mediating their K63-linked polyubiquitination. The chain is E3 ubiquitin-protein ligase marc-3 from Caenorhabditis elegans.